We begin with the raw amino-acid sequence, 500 residues long: Cysteine--tRNA ligase (500 aa).

Residue Cys-29 coordinates Zn(2+). The 'HIGH' region motif lies at 31–41 (VTVYDLCHLGH). Positions 213, 238, and 242 each coordinate Zn(2+). The short motif at 270-274 (KMSKS) is the 'KMSKS' region element. Lys-273 serves as a coordination point for ATP.

This sequence belongs to the class-I aminoacyl-tRNA synthetase family. In terms of assembly, monomer. Requires Zn(2+) as cofactor.

It is found in the cytoplasm. The catalysed reaction is tRNA(Cys) + L-cysteine + ATP = L-cysteinyl-tRNA(Cys) + AMP + diphosphate. This chain is Cysteine--tRNA ligase, found in Prochlorococcus marinus (strain NATL1A).